Reading from the N-terminus, the 386-residue chain is 2-deoxy-scyllo-inosose synthase (386 aa).

Residues D42, 73–76, 105–109, 129–130, 140–142, and 151–152 contribute to the NAD(+) site; these read EVHK, GITGN, TT, SLK, and KN. The active site involves K142. E184 is a binding site for Co(2+). Residue E244 is part of the active site. Co(2+)-binding residues include H247 and H263.

Belongs to the sugar phosphate cyclases superfamily. DOI synthase family. The cofactor is NAD(+). Co(2+) serves as cofactor.

It carries out the reaction D-glucose 6-phosphate = 2-deoxy-L-scyllo-inosose + phosphate. The protein operates within metabolic intermediate biosynthesis; 2-deoxystreptamine biosynthesis; 2-deoxystreptamine from D-glucose 6-phosphate: step 1/4. Its pathway is antibiotic biosynthesis; paromomycin biosynthesis. Catalyzes the intramolecular carbocycle formation from D-glucose-6-phosphate to 2-deoxy-scyllo-inosose (DOI). This Streptomyces paromomycinus (Streptomyces rimosus subsp. paromomycinus) protein is 2-deoxy-scyllo-inosose synthase (parC).